Reading from the N-terminus, the 373-residue chain is Chaperone protein DnaJ (373 aa).

The J domain occupies 5 to 70 (DYYELLEVDR…EKRALYDQYG (66 aa)). The CR-type zinc-finger motif lies at 134-211 (GTQKEVHYSF…CSGKGYRIEK (78 aa)). Zn(2+)-binding residues include Cys147, Cys150, Cys163, Cys166, Cys185, Cys188, Cys199, and Cys202. CXXCXGXG motif repeat units lie at residues 147–154 (CSACKGTG), 163–170 (CPECHGRG), 185–192 (CPRCHGQG), and 199–206 (CEECSGKG).

It belongs to the DnaJ family. Homodimer. The cofactor is Zn(2+).

Its subcellular location is the cytoplasm. In terms of biological role, participates actively in the response to hyperosmotic and heat shock by preventing the aggregation of stress-denatured proteins and by disaggregating proteins, also in an autonomous, DnaK-independent fashion. Unfolded proteins bind initially to DnaJ; upon interaction with the DnaJ-bound protein, DnaK hydrolyzes its bound ATP, resulting in the formation of a stable complex. GrpE releases ADP from DnaK; ATP binding to DnaK triggers the release of the substrate protein, thus completing the reaction cycle. Several rounds of ATP-dependent interactions between DnaJ, DnaK and GrpE are required for fully efficient folding. Also involved, together with DnaK and GrpE, in the DNA replication of plasmids through activation of initiation proteins. The protein is Chaperone protein DnaJ of Nitratiruptor sp. (strain SB155-2).